Here is a 241-residue protein sequence, read N- to C-terminus: Demethylmenaquinone methyltransferase (241 aa).

S-adenosyl-L-methionine is bound by residues T60, D81, and 106-107 (DA).

Belongs to the class I-like SAM-binding methyltransferase superfamily. MenG/UbiE family.

It catalyses the reaction a 2-demethylmenaquinol + S-adenosyl-L-methionine = a menaquinol + S-adenosyl-L-homocysteine + H(+). It participates in quinol/quinone metabolism; menaquinone biosynthesis; menaquinol from 1,4-dihydroxy-2-naphthoate: step 2/2. In terms of biological role, methyltransferase required for the conversion of demethylmenaquinol (DMKH2) to menaquinol (MKH2). In Staphylococcus epidermidis (strain ATCC 35984 / DSM 28319 / BCRC 17069 / CCUG 31568 / BM 3577 / RP62A), this protein is Demethylmenaquinone methyltransferase.